We begin with the raw amino-acid sequence, 175 residues long: NADH-ubiquinone oxidoreductase chain 6 (175 aa).

The next 6 helical transmembrane spans lie at 1 to 21 (MMYI…GFSS), 24 to 44 (SPVY…GIIM), 51 to 71 (LGLV…GYTI), 87 to 107 (VVLS…VWLF), 113 to 133 (LVGF…GSFG), and 148 to 168 (YGFW…FIAI).

It belongs to the complex I subunit 6 family. As to quaternary structure, core subunit of respiratory chain NADH dehydrogenase (Complex I) which is composed of 45 different subunits.

It is found in the mitochondrion inner membrane. It catalyses the reaction a ubiquinone + NADH + 5 H(+)(in) = a ubiquinol + NAD(+) + 4 H(+)(out). Core subunit of the mitochondrial membrane respiratory chain NADH dehydrogenase (Complex I) which catalyzes electron transfer from NADH through the respiratory chain, using ubiquinone as an electron acceptor. Essential for the catalytic activity and assembly of complex I. This is NADH-ubiquinone oxidoreductase chain 6 (MT-ND6) from Mammuthus primigenius (Siberian woolly mammoth).